We begin with the raw amino-acid sequence, 265 residues long: Anamorsin homolog 1 (265 aa).

Positions 1–143 are N-terminal SAM-like domain; that stretch reads MAATVAEALA…KVSWSLGSSF (143 aa). Residues 144-175 form a linker region; it reads PLKKATKGLPKIQIDDDSELIDEDSLLTEDDL. Cys-186, Cys-195, Cys-198, and Cys-200 together coordinate [2Fe-2S] cluster. The segment at 186–200 is fe-S binding site A; sequence CEVGATRKACKNCTC. 4 residues coordinate [4Fe-4S] cluster: Cys-226, Cys-229, Cys-237, and Cys-240. 2 consecutive short sequence motifs (cx2C motif) follow at residues 226 to 229 and 237 to 240; these read CGNC and CGTC. The fe-S binding site B stretch occupies residues 226–240; the sequence is CGNCGLGDAFRCGTC.

Belongs to the anamorsin family. As to quaternary structure, monomer. [2Fe-2S] cluster serves as cofactor. Requires [4Fe-4S] cluster as cofactor.

The protein resides in the cytoplasm. It is found in the mitochondrion intermembrane space. Functionally, component of the cytosolic iron-sulfur (Fe-S) protein assembly (CIA) machinery. Required for the maturation of extramitochondrial Fe-S proteins. Part of an electron transfer chain functioning in an early step of cytosolic Fe-S biogenesis, facilitating the de novo assembly of a [4Fe-4S] cluster on the cytosolic Fe-S scaffold complex. Electrons are transferred from NADPH via a FAD- and FMN-containing diflavin oxidoreductase. Together with the diflavin oxidoreductase, also required for the assembly of the diferric tyrosyl radical cofactor of ribonucleotide reductase (RNR), probably by providing electrons for reduction during radical cofactor maturation in the catalytic small subunit. The chain is Anamorsin homolog 1 from Oryza sativa subsp. japonica (Rice).